The chain runs to 197 residues: NADH-quinone oxidoreductase subunit C (197 aa).

The protein belongs to the complex I 30 kDa subunit family. NDH-1 is composed of 14 different subunits. Subunits NuoB, C, D, E, F, and G constitute the peripheral sector of the complex.

Its subcellular location is the cell inner membrane. The catalysed reaction is a quinone + NADH + 5 H(+)(in) = a quinol + NAD(+) + 4 H(+)(out). In terms of biological role, NDH-1 shuttles electrons from NADH, via FMN and iron-sulfur (Fe-S) centers, to quinones in the respiratory chain. The immediate electron acceptor for the enzyme in this species is believed to be ubiquinone. Couples the redox reaction to proton translocation (for every two electrons transferred, four hydrogen ions are translocated across the cytoplasmic membrane), and thus conserves the redox energy in a proton gradient. This chain is NADH-quinone oxidoreductase subunit C, found in Methylobacillus flagellatus (strain ATCC 51484 / DSM 6875 / VKM B-1610 / KT).